The primary structure comprises 163 residues: Photosystem II extrinsic protein V (163 aa).

Positions 1 to 26 (MFKKSYQFFALVLFSIFNVLVTSASA) are cleaved as a signal peptide. The heme c site is built by Cys63, Cys66, His67, and His118.

It belongs to the cytochrome c family. PsbV subfamily. As to quaternary structure, PSII is composed of 1 copy each of membrane proteins PsbA, PsbB, PsbC, PsbD, PsbE, PsbF, PsbH, PsbI, PsbJ, PsbK, PsbL, PsbM, PsbT, PsbY, PsbZ, Psb30/Ycf12, at least 3 peripheral proteins of the oxygen-evolving complex and a large number of cofactors. It forms dimeric complexes. It depends on heme c as a cofactor.

It localises to the plastid. The protein resides in the chloroplast thylakoid membrane. Functionally, one of the extrinsic, lumenal subunits of photosystem II (PSII). PSII is a light-driven water plastoquinone oxidoreductase, using light energy to abstract electrons from H(2)O, generating a proton gradient subsequently used for ATP formation. The extrinsic proteins stabilize the structure of photosystem II oxygen-evolving complex (OEC), the ion environment of oxygen evolution and protect the OEC against heat-induced inactivation. The chain is Photosystem II extrinsic protein V from Trieres chinensis (Marine centric diatom).